A 128-amino-acid polypeptide reads, in one-letter code: Holin-like protein CidA (128 aa).

Transmembrane regions (helical) follow at residues 4–24 (LLLT…INWV), 26–46 (ALLH…FTLL), 59–79 (GAAW…VGVI), and 88–108 (FGVS…VSTG).

This sequence belongs to the CidA/LrgA family. CidA subfamily.

The protein resides in the cell membrane. In terms of biological role, increases the activity of extracellular murein hydrolases possibly by mediating their export via hole formation. Inhibited by the antiholin-like proteins LrgAB. In an unstressed cell, the LrgAB products probably inhibit the function of the CidA protein. When a cell is stressed by the addition of antibiotics or by other factors in the environment, CidA possibly oligomerizes within the bacterial cell membrane, creating lesions that disrupt the proton motive force, which in turn results in loss of cell viability. These lesions are also hypothesized to regulate the subsequent cell lysis by either allowing the murein hydrolases access to the cell wall substrate and/or regulating their activity by a possible change in the cell wall pH that results from loss of membrane potential. The protein is Holin-like protein CidA of Bacillus subtilis (strain 168).